A 238-amino-acid polypeptide reads, in one-letter code: Small ribosomal subunit protein uS2 (238 aa).

It belongs to the universal ribosomal protein uS2 family.

This is Small ribosomal subunit protein uS2 from Actinobacillus pleuropneumoniae serotype 5b (strain L20).